The primary structure comprises 156 residues: UPF0262 protein Jann_2882 (156 aa).

The protein belongs to the UPF0262 family.

The polypeptide is UPF0262 protein Jann_2882 (Jannaschia sp. (strain CCS1)).